The following is a 453-amino-acid chain: Putative folate transporter 2 (453 aa).

Transmembrane regions (helical) follow at residues 41–64 (IVVYLVGLSDGLIHLASLAIYYLF), 76–96 (SLILMYPYLPFILKPIIALIT), 108–126 (PYLFLFSLFQSLNFLSLAL), 132–156 (IQATLVLFFISLCASFCTTVAEALV), 176–195 (IASKAVGSLSVAYFSGYFLE), 201–220 (YIFMATSIFPLIISISCLFL), 241–260 (FINTPVFIGPFLYIFVYMSG), 280–300 (SFMGTLRLTYGIASLIGIIVY), 312–330 (TLIFTTLVSFPIYISPIIL), 346–366 (VLSGGFLIEAITEIQLLPLFI), and 416–437 (LSMYILTCGLFLLLSLSLVPLL).

Belongs to the major facilitator superfamily. Folate-biopterin transporter (TC 2.A.71) family.

It is found in the plastid. The protein localises to the apicoplast. Its subcellular location is the membrane. Putative folate transporter. Required for sporogony of malaria parasites and host switching. In Plasmodium berghei (strain Anka), this protein is Putative folate transporter 2.